A 328-amino-acid polypeptide reads, in one-letter code: UPF0421 protein SAR1980 (328 aa).

Transmembrane regions (helical) follow at residues 19-39 (IAIF…IYAI), 61-81 (LPAT…FGDQ), 108-128 (VAVL…IFNF), and 132-152 (TLTA…VFPP).

The protein belongs to the UPF0421 family.

Its subcellular location is the cell membrane. In Staphylococcus aureus (strain MRSA252), this protein is UPF0421 protein SAR1980.